The following is a 101-amino-acid chain: Small ribosomal subunit protein uS14 (101 aa).

This sequence belongs to the universal ribosomal protein uS14 family. As to quaternary structure, part of the 30S ribosomal subunit. Contacts proteins S3 and S10.

Its function is as follows. Binds 16S rRNA, required for the assembly of 30S particles and may also be responsible for determining the conformation of the 16S rRNA at the A site. In Methylibium petroleiphilum (strain ATCC BAA-1232 / LMG 22953 / PM1), this protein is Small ribosomal subunit protein uS14.